A 170-amino-acid chain; its full sequence is Ankyrin repeat-containing protein C105.02c (170 aa).

ANK repeat units lie at residues Leu46–Asn76 and Thr81–Leu116. The segment at Ser150–Glu170 is disordered. The span at Val154–Glu170 shows a compositional bias: acidic residues.

The protein resides in the cytoplasm. It localises to the nucleus. This is Ankyrin repeat-containing protein C105.02c from Schizosaccharomyces pombe (strain 972 / ATCC 24843) (Fission yeast).